The sequence spans 287 residues: Thioredoxin-related transmembrane protein 2 (287 aa).

A signal peptide spans 1-35; the sequence is MAVLAPLLAFLYAVPGLLRWVSQPYYLLSALLSVS. Over 36–112 the chain is Extracellular; it reads FLLVRKVPPV…ILFFRLDLRM (77 aa). The chain crosses the membrane as a helical span at residues 113–133; the sequence is GLLYITLCIVFLMTCKPPLYL. Residues 134–287 are Cytoplasmic-facing; that stretch reads GPEHIKYFSD…NEYNDSKKDQ (154 aa). In terms of domain architecture, Thioredoxin spans 135–269; that stretch reads PEHIKYFSDK…LYQKAKKIRK (135 aa). Positions 284 to 287 match the Di-lysine motif motif; that stretch reads KKDQ.

As to quaternary structure, monomer. Homodimer; disulfide-linked. Occurs in both reduced and oxidized monomeric form. Oxidative conditions increase homodimerization.

The protein localises to the endoplasmic reticulum membrane. It localises to the mitochondrion membrane. In terms of biological role, endoplasmic reticulum and mitochondria-associated protein that probably functions as a regulator of cellular redox state and thereby regulates protein post-translational modification, protein folding and mitochondrial activity. The chain is Thioredoxin-related transmembrane protein 2 (tmx2) from Xenopus tropicalis (Western clawed frog).